We begin with the raw amino-acid sequence, 44 residues long: Photosystem I reaction center subunit IX (44 aa).

The chain crosses the membrane as a helical span at residues 7 to 27; it reads YLSTAPVLTTLWFGSLAGLLI.

This sequence belongs to the PsaJ family.

The protein resides in the plastid. Its subcellular location is the chloroplast thylakoid membrane. Functionally, may help in the organization of the PsaE and PsaF subunits. The protein is Photosystem I reaction center subunit IX of Phalaenopsis aphrodite subsp. formosana (Moth orchid).